The following is a 96-amino-acid chain: Co-chaperonin GroES 1 (96 aa).

This sequence belongs to the GroES chaperonin family. As to quaternary structure, heptamer of 7 subunits arranged in a ring. Interacts with the chaperonin GroEL.

Its subcellular location is the cytoplasm. Its function is as follows. Together with the chaperonin GroEL, plays an essential role in assisting protein folding. The GroEL-GroES system forms a nano-cage that allows encapsulation of the non-native substrate proteins and provides a physical environment optimized to promote and accelerate protein folding. GroES binds to the apical surface of the GroEL ring, thereby capping the opening of the GroEL channel. The sequence is that of Co-chaperonin GroES 1 from Vibrio vulnificus (strain CMCP6).